A 239-amino-acid chain; its full sequence is Cysteine-rich venom protein (239 aa).

The N-terminal stretch at 1 to 19 (MIAFLVLPILAAVLQQSSG) is a signal peptide. An SCP domain is found at 39-166 (DLHNSLRRSV…EYKYFYVCQY (128 aa)). 8 cysteine pairs are disulfide-bonded: Cys-75–Cys-153, Cys-92–Cys-167, Cys-148–Cys-164, Cys-186–Cys-193, Cys-189–Cys-198, Cys-202–Cys-234, Cys-211–Cys-228, and Cys-219–Cys-232. A ShKT domain is found at 202–234 (CTHEDKFTNCKDLVKQGCNNNYLKTNCPASCSC).

It belongs to the CRISP family. In terms of tissue distribution, expressed by the venom gland.

The protein resides in the secreted. Functionally, blocks contraction of smooth muscle elicited by high potassium-induced depolarization, but does not block caffeine-stimulated contraction. May target voltage-gated calcium channels in smooth muscle. The protein is Cysteine-rich venom protein of Vipera berus (Common European adder).